The sequence spans 137 residues: uncharacterized protein (137 aa).

The disordered stretch occupies residues 67 to 87 (KSERQHQRVHHELPHDKPRQS). Positions 70 to 85 (RQHQRVHHELPHDKPR) are enriched in basic and acidic residues.

This is an uncharacterized protein from Human cytomegalovirus (strain AD169) (HHV-5).